A 295-amino-acid polypeptide reads, in one-letter code: Alpha-ketoglutarate-dependent sulfate ester dioxygenase (295 aa).

His-71 contributes to the substrate binding site. Fe cation-binding residues include His-98 and Asp-100. Val-101 contributes to the substrate binding site. Residue Thr-125 participates in 2-oxoglutarate binding. His-252 is a binding site for Fe cation. Positions 263 and 267 each coordinate 2-oxoglutarate.

The protein belongs to the TfdA dioxygenase family. It depends on Fe(2+) as a cofactor.

The enzyme catalyses a primary linear alkyl sulfate ester + 2-oxoglutarate + O2 = an aldehyde + sulfate + succinate + CO2 + H(+). It carries out the reaction 2-ethylhexyl sulfate + 2-oxoglutarate + O2 = 2-ethylhexanal + sulfate + succinate + CO2 + H(+). The catalysed reaction is hexyl sulfate + 2-oxoglutarate + O2 = hexanal + sulfate + succinate + CO2 + H(+). It catalyses the reaction pentyl sulfate + 2-oxoglutarate + O2 = pentanal + sulfate + succinate + CO2 + H(+). The enzyme catalyses heptyl sulfate + 2-oxoglutarate + O2 = heptanal + sulfate + succinate + CO2 + H(+). Functionally, alpha-ketoglutarate-dependent sulfate ester dioxygenase, which oxidizes medium-chain alkyl-sulfate esters. Shows preference for 2-ethylhexyl sulfate (2-EHS) in vitro, leading to the formation of succinate and 2-ethylhexanal. Has likely a role in sulfate scavenging in vivo. Also causes the inactivation of the 2-carboxyquinoxaline Ty38c (an antitubercular compound that inhibits DprE1) via oxidative decarboxylation, using Ty38c instead of alpha-ketoglutarate as a substrate. Is thus responsible for primary resistance of M.tuberculosis to Ty38c in vitro. Overexpression of Rv3406 causes resistance to Ty38c. This chain is Alpha-ketoglutarate-dependent sulfate ester dioxygenase, found in Mycobacterium tuberculosis (strain ATCC 25618 / H37Rv).